We begin with the raw amino-acid sequence, 313 residues long: Homoserine O-succinyltransferase (313 aa).

The active-site Acyl-thioester intermediate is the C142. Residues K163 and S192 each coordinate substrate. H235 serves as the catalytic Proton acceptor. The active site involves E237. A substrate-binding site is contributed by R249.

It belongs to the MetA family.

Its subcellular location is the cytoplasm. The enzyme catalyses L-homoserine + succinyl-CoA = O-succinyl-L-homoserine + CoA. It functions in the pathway amino-acid biosynthesis; L-methionine biosynthesis via de novo pathway; O-succinyl-L-homoserine from L-homoserine: step 1/1. Transfers a succinyl group from succinyl-CoA to L-homoserine, forming succinyl-L-homoserine. The protein is Homoserine O-succinyltransferase of Vibrio vulnificus (strain YJ016).